The chain runs to 166 residues: uncharacterized protein (166 aa).

An ATP-binding site is contributed by 117-124 (AAKSGGKT).

This is an uncharacterized protein from Mycoplasma pneumoniae (strain ATCC 29342 / M129 / Subtype 1) (Mycoplasmoides pneumoniae).